The following is a 1460-amino-acid chain: Collagen alpha-1(I) chain (1460 aa).

The first 22 residues, 1–22, serve as a signal peptide directing secretion; the sequence is MFSFVDLRLLLLLAATALLTHG. Residues 23–157 constitute a propeptide, N-terminal propeptide; that stretch reads QEEGQEEDIP…PPGLGGNFAP (135 aa). The region spanning 34-92 is the VWFC domain; sequence VTCVQNGLRYYDRDVWKPEACRICVCDNGNVLCDDVICDETKNCPGAQVPPGECCPVCP. Residues 96–1213 are disordered; sequence ASPTDQETTG…KAHDGGRYYR (1118 aa). The segment covering 134–149 has biased composition (pro residues); it reads PGLPGPPGPPGPPGPP. The nonhelical region (N-terminal) stretch occupies residues 158–174; sequence QMSYGYDEKSTGGISVP. Allysine is present on K166. Position 167 is a phosphoserine (S167). Residues 175-1188 form a triple-helical region region; the sequence is GPMGPSGPRG…PGPPGPPGPP (1014 aa). Residues P186, P189, P192, P201, P204, P207, P222, P237, P243, P252, and P258 each carry the 4-hydroxyproline modification. Residues 194-213 show a composition bias toward low complexity; it reads PQGFQGPPGEPGEPGASGPM. Positions 225 to 239 are enriched in basic and acidic residues; the sequence is NGDDGEAGKPGRPGE. K261 is subject to 5-hydroxylysine; alternate. K261 carries O-linked (Gal...) hydroxylysine; alternate glycosylation. Residue S267 is modified to Phosphoserine. Over residues 275–291 the composition is skewed to low complexity; that stretch reads DAGPAGPKGEPGSPGEN. 5 positions are modified to 4-hydroxyproline: P285, P288, P294, P303, and P309. Over residues 314 to 327 the composition is skewed to low complexity; that stretch reads PAGARGNDGATGAA. The segment covering 329–341 has biased composition (pro residues); the sequence is PPGPTGPAGPPGF. Residues P330, P339, P342, P369, P372, P384, P390, P399, P405, P408, and P423 each carry the 4-hydroxyproline modification. A compositionally biased stretch (low complexity) spans 375–414; the sequence is AGAAGPAGNPGADGQPGAKGANGAPGIAGAPGFPGARGPS. K426 is subject to 5-hydroxylysine. A 4-hydroxyproline mark is found at P432, P435, P447, P456, P471, P477, P486, and P492. A compositionally biased stretch (gly residues) spans 481 to 490; sequence GERGGPGSRG. K501 carries the post-translational modification 5-hydroxylysine. 4-hydroxyproline occurs at positions 510, 519, 525, 531, 540, 543, 552, 561, 567, 579, 588, 597, 600, 618, 636, 642, 648, 654, 660, 666, 678, 687, 699, 711, 714, 720, 726, and 735. Low complexity predominate over residues 534–560; it reads KGLTGSPGSPGPDGKTGPPGPAGQDGR. Residues 569–588 show a composition bias toward low complexity; sequence ARGQAGVMGFPGPKGAAGEP. A compositionally biased stretch (low complexity) spans 630–657; it reads QGPAGSPGFQGLPGPAGPPGEAGKPGEQ. Residues 692–720 are compositionally biased toward low complexity; that stretch reads PRGANGAPGNDGAKGDAGAPGAPGSQGAP. A Cell attachment site motif is present at residues 741-743; that stretch reads RGD. K747 carries the post-translational modification 5-hydroxylysine. 3 positions are modified to 4-hydroxyproline: P753, P768, and P774. Over residues 780–794 the composition is skewed to low complexity; that stretch reads AGPSGPAGPTGARGA. S783 bears the Phosphoserine mark. 4-hydroxyproline occurs at positions 795, 801, 804, 813, 819, 837, 846, and 855. Residues 807–834 are compositionally biased toward low complexity; it reads AGFAGPPGADGQPGAKGEPGDAGAKGDA. Over residues 836–848 the composition is skewed to pro residues; the sequence is PPGPAGPTGPPGP. K858 carries the 5-hydroxylysine modification. Low complexity predominate over residues 863-879; it reads SAGPPGATGFPGAAGRV. 2 positions are modified to 4-hydroxyproline: P867 and P873. P881 is subject to 3-hydroxyproline. P882, P891, P894, P915, P924, P933, P942, P960, P969, P972, P978, P993, P999, P1005, P1014, and P1020 each carry 4-hydroxyproline. Residues 908–917 show a composition bias toward low complexity; that stretch reads ETGPAGRPGE. The span at 927 to 951 shows a compositional bias: low complexity; that stretch reads AGEKGSPGADGPAGAPGTPGPQGIA. The span at 992–1002 shows a compositional bias: pro residues; sequence PPGPMGPPGLA. The span at 1004-1019 shows a compositional bias: low complexity; sequence PPGESGREGSPGAEGS. At K1029 the chain carries 5-hydroxylysine. The segment covering 1038-1053 has biased composition (pro residues); sequence AGPPGAPGAPGAPGPV. Residues P1041, P1044, and P1047 each carry the 4-hydroxyproline modification. Over residues 1074-1088 the composition is skewed to low complexity; it reads IGPVGARGPAGPQGP. Positions 1089-1091 match the Cell attachment site motif; it reads RGD. The segment covering 1089–1103 has biased composition (basic and acidic residues); sequence RGDKGETGEQGDRGI. 5-hydroxylysine is present on K1092. Residue K1104 is modified to 5-hydroxylysine; alternate. O-linked (Gal...) hydroxylysine; alternate glycosylation occurs at K1104. 5 positions are modified to 4-hydroxyproline: P1116, P1119, P1122, P1140, and P1155. The span at 1122 to 1155 shows a compositional bias: low complexity; that stretch reads PGEQGPSGASGPAGPRGPPGSAGSPGKDGLNGLP. 3-hydroxyproline is present on P1160. P1161 is subject to 4-hydroxyproline. A compositionally biased stretch (pro residues) spans 1173–1188; that stretch reads VGPPGPPGPPGPPGPP. P1175 is subject to 3-hydroxyproline. 4-hydroxyproline is present on P1176. P1178 bears the 3-hydroxyproline mark. A 4-hydroxyproline modification is found at P1179. At P1181 the chain carries 3-hydroxyproline. 4-hydroxyproline is present on residues P1182, P1185, and P1188. Residues 1189-1214 form a nonhelical region (C-terminal) region; sequence SGGFDFSFLPQPPQEKAHDGGRYYRA. Residues 1203–1213 are compositionally biased toward basic and acidic residues; the sequence is EKAHDGGRYYR. K1204 carries the allysine modification. Residues 1215–1460 constitute a propeptide, C-terminal propeptide; it reads DDANVVRDRD…GMDIGPVCFL (246 aa). The region spanning 1225 to 1460 is the Fibrillar collagen NC1 domain; that stretch reads LEVDTTLKSL…GMDIGPVCFL (236 aa). Disulfide bonds link C1255/C1287, C1295/C1458, and C1366/C1411. 5 residues coordinate Ca(2+): D1273, N1275, Q1276, C1278, and D1281. Residue N1361 is glycosylated (N-linked (GlcNAc...) asparagine).

It belongs to the fibrillar collagen family. Trimers of one alpha 2(I) and two alpha 1(I) chains. Interacts with MRC2. Interacts with TRAM2. Interacts with MFAP4 in a Ca (2+)-dependent manner. Contains mostly 4-hydroxyproline. Proline residues at the third position of the tripeptide repeating unit (G-X-Y) are hydroxylated in some or all of the chains. In terms of processing, contains 3-hydroxyproline at a few sites. This modification occurs on the first proline residue in the sequence motif Gly-Pro-Hyp, where Hyp is 4-hydroxyproline. Post-translationally, lysine residues at the third position of the tripeptide repeating unit (G-X-Y) are 5-hydroxylated in some or all of the chains. O-glycosylated on hydroxylated lysine residues. The O-linked glycan consists of a Glc-Gal disaccharide.

The protein resides in the secreted. Its subcellular location is the extracellular space. It is found in the extracellular matrix. Functionally, type I collagen is a member of group I collagen (fibrillar forming collagen). The polypeptide is Collagen alpha-1(I) chain (COL1A1) (Canis lupus familiaris (Dog)).